Here is a 619-residue protein sequence, read N- to C-terminus: Kinesin light chain 4 (619 aa).

An N-acetylserine modification is found at S2. Residues 55–88 (QQGGHEEGLVHEKARQLRRSMENIELGLSEAQVM) form a TPR 1 repeat. Positions 65 to 155 (HEKARQLRRS…HLEFLRQLRQ (91 aa)) form a coiled coil. Over residues 156–175 (YDEDGHGMEEKEGEATKDSL) the composition is skewed to basic and acidic residues. Residues 156–199 (YDEDGHGMEEKEGEATKDSLDDLFPNEEEEDSGNDLSRGQGAAA) form a disordered region. The residue at position 174 (S174) is a Phosphoserine. Over residues 179-188 (FPNEEEEDSG) the composition is skewed to acidic residues. 5 TPR repeats span residues 211–244 (LRTL…LERT), 253–286 (ATML…REST), 295–328 (AATL…REKV), 337–370 (AKQL…YESQ), and 379–412 (ARTK…AHVQ). The residue at position 460 (S460) is a Phosphoserine. The stretch at 464–497 (NTTLKNLGALYRRQGKLEAAETLEECALRSRKQG) is one TPR 7 repeat. 3 positions are modified to phosphoserine: S565, S566, and S590. The segment at 571–619 (RKLQGTEPRPSSSSMKRAASLNYLNQPNAAPLQVSRGLSASTVDLSSSS) is disordered. A compositionally biased stretch (low complexity) spans 609–619 (SASTVDLSSSS). T612 bears the Phosphothreonine mark.

This sequence belongs to the kinesin light chain family. As to quaternary structure, oligomeric complex composed of two heavy chains and two light chains.

The protein resides in the cytoplasm. It is found in the cytoskeleton. Functionally, kinesin is a microtubule-associated force-producing protein that may play a role in organelle transport. The light chain may function in coupling of cargo to the heavy chain or in the modulation of its ATPase activity. This Mus musculus (Mouse) protein is Kinesin light chain 4 (Klc4).